Here is a 724-residue protein sequence, read N- to C-terminus: Phosphoribosylformylglycinamidine synthase subunit PurL (724 aa).

The active site involves His34. Residues Tyr37 and Lys75 each contribute to the ATP site. Glu77 serves as a coordination point for Mg(2+). Residues 78–81 (SHNH) and Arg100 each bind substrate. The Proton acceptor role is filled by His79. Asp101 provides a ligand contact to Mg(2+). Substrate is bound at residue Gln221. Asp249 provides a ligand contact to Mg(2+). 292–294 (ESQ) contributes to the substrate binding site. Residues Asp478 and Gly515 each contribute to the ATP site. Ser518 contacts substrate.

This sequence belongs to the FGAMS family. As to quaternary structure, monomer. Part of the FGAM synthase complex composed of 1 PurL, 1 PurQ and 2 PurS subunits.

The protein localises to the cytoplasm. The catalysed reaction is N(2)-formyl-N(1)-(5-phospho-beta-D-ribosyl)glycinamide + L-glutamine + ATP + H2O = 2-formamido-N(1)-(5-O-phospho-beta-D-ribosyl)acetamidine + L-glutamate + ADP + phosphate + H(+). It functions in the pathway purine metabolism; IMP biosynthesis via de novo pathway; 5-amino-1-(5-phospho-D-ribosyl)imidazole from N(2)-formyl-N(1)-(5-phospho-D-ribosyl)glycinamide: step 1/2. Part of the phosphoribosylformylglycinamidine synthase complex involved in the purines biosynthetic pathway. Catalyzes the ATP-dependent conversion of formylglycinamide ribonucleotide (FGAR) and glutamine to yield formylglycinamidine ribonucleotide (FGAM) and glutamate. The FGAM synthase complex is composed of three subunits. PurQ produces an ammonia molecule by converting glutamine to glutamate. PurL transfers the ammonia molecule to FGAR to form FGAM in an ATP-dependent manner. PurS interacts with PurQ and PurL and is thought to assist in the transfer of the ammonia molecule from PurQ to PurL. This chain is Phosphoribosylformylglycinamidine synthase subunit PurL, found in Caldivirga maquilingensis (strain ATCC 700844 / DSM 13496 / JCM 10307 / IC-167).